The following is a 443-amino-acid chain: Glucose-6-phosphate isomerase (443 aa).

Glu-285 (proton donor) is an active-site residue. Catalysis depends on residues His-306 and Lys-420.

It belongs to the GPI family.

It localises to the cytoplasm. The enzyme catalyses alpha-D-glucose 6-phosphate = beta-D-fructose 6-phosphate. Its pathway is carbohydrate biosynthesis; gluconeogenesis. The protein operates within carbohydrate degradation; glycolysis; D-glyceraldehyde 3-phosphate and glycerone phosphate from D-glucose: step 2/4. In terms of biological role, catalyzes the reversible isomerization of glucose-6-phosphate to fructose-6-phosphate. This chain is Glucose-6-phosphate isomerase, found in Staphylococcus aureus (strain Mu3 / ATCC 700698).